A 122-amino-acid polypeptide reads, in one-letter code: Biogenesis of lysosome-related organelles complex 1 subunit CNL1 (122 aa).

The segment covering 1-10 has biased composition (basic and acidic residues); it reads MQDNSSHSRE. Residues 1-21 are disordered; that stretch reads MQDNSSHSRESASAGDDPLGI. A coiled-coil region spans residues 63–95; the sequence is ENTIDKNIAKFKELLEKCDTLENHYEMLNQLAI.

It belongs to the BLOC1S4 family. As to quaternary structure, component of the biogenesis of lysosome-related organelles complex-1 (BLOC-1) composed of at least BLI1, BLS1, CNL1, KXD1, SNN1 and VAB2.

The protein resides in the cytoplasm. In terms of biological role, component of the biogenesis of lysosome-related organelles complex-1 (BLOC-1), a complex that is involved in endosomal cargo sorting. In Saccharomyces cerevisiae (strain ATCC 204508 / S288c) (Baker's yeast), this protein is Biogenesis of lysosome-related organelles complex 1 subunit CNL1 (CNL1).